The sequence spans 39 residues: U2-ctenitoxin-Co1a (39 aa).

In terms of processing, disulfide bonds are present. In terms of tissue distribution, expressed by the venom gland.

The protein resides in the secreted. Functionally, omega-agatoxins are antagonists of voltage-gated calcium channels (Cav). The polypeptide is U2-ctenitoxin-Co1a (Ctenus ornatus (Brazilian spider)).